A 468-amino-acid polypeptide reads, in one-letter code: Argininosuccinate lyase (468 aa).

It belongs to the lyase 1 family. Argininosuccinate lyase subfamily.

The protein localises to the cytoplasm. The enzyme catalyses 2-(N(omega)-L-arginino)succinate = fumarate + L-arginine. It functions in the pathway amino-acid biosynthesis; L-arginine biosynthesis; L-arginine from L-ornithine and carbamoyl phosphate: step 3/3. The chain is Argininosuccinate lyase from Methanothermobacter thermautotrophicus (strain ATCC 29096 / DSM 1053 / JCM 10044 / NBRC 100330 / Delta H) (Methanobacterium thermoautotrophicum).